A 332-amino-acid polypeptide reads, in one-letter code: L-lactate dehydrogenase A chain (332 aa).

NAD(+) contacts are provided by residues 29 to 57 (GMVG…MEDK) and Arg-99. 3 residues coordinate substrate: Arg-106, Asn-138, and Arg-169. Asn-138 is a binding site for NAD(+). The active-site Proton acceptor is the His-193. Thr-248 provides a ligand contact to substrate.

Belongs to the LDH/MDH superfamily. LDH family. Homotetramer.

The protein resides in the cytoplasm. The catalysed reaction is (S)-lactate + NAD(+) = pyruvate + NADH + H(+). It participates in fermentation; pyruvate fermentation to lactate; (S)-lactate from pyruvate: step 1/1. In terms of biological role, interconverts simultaneously and stereospecifically pyruvate and lactate with concomitant interconversion of NADH and NAD(+). The chain is L-lactate dehydrogenase A chain (ldha) from Sphyraena argentea (Pacific barracuda).